Consider the following 227-residue polypeptide: MMVAHTAQQLDLREKLLTNGVHSLSDIELLAIFISSGNNRKSCLQLAYELTKHLGNLRNILNADLQSFKSIHGLGEVRYAQLQAAKEICHRSDFIDLQKEIRLSNTQQTYAFLKKRLRDYKNETFAALFLDNQHRIIAYEELFSGTINTATVYPRPIVERVLQLNAAALILAHNHPSGLSDASQQDLAITERIRDALDLVDARLLDHIVIGDNEVYSIFAENKWVCN.

The 124-residue stretch at 102–225 folds into the MPN domain; sequence RLSNTQQTYA…YSIFAENKWV (124 aa). Residues His173, His175, and Asp186 each contribute to the Zn(2+) site. The JAMM motif motif lies at 173 to 186; it reads HNHPSGLSDASQQD.

Belongs to the UPF0758 family.

The polypeptide is UPF0758 protein lpp2553 (Legionella pneumophila (strain Paris)).